Consider the following 67-residue polypeptide: Systemic RNA interference defective protein 5 (67 aa).

Residues 1–18 are Extracellular-facing; the sequence is MPSKNCAKNLHACQWERD. Residues 19 to 39 form a helical membrane-spanning segment; it reads IALVFLGLMVLFNIGQVVYMN. The Cytoplasmic segment spans residues 40-67; it reads RARLYRLIRRGAEQIPADDEEPIIGIRD.

Ubiquitously present in most tissues tested. Expressed in the somatic cells of intestine, muscle, neurons, somatic gonad and embryos but not in the germline (at protein level).

Its subcellular location is the late endosome membrane. Its function is as follows. Plays a role in RNA-mediated gene silencing by mediating transport of both ingested and endogenous dsRNA between cells. Not required for the uptake of dsRNA from the intestinal lumen. This Caenorhabditis elegans protein is Systemic RNA interference defective protein 5.